Here is a 254-residue protein sequence, read N- to C-terminus: MNAVMTDVRDLIRYCDDVLDAARFADYAPNGLQVEGERPLQRLVSGVTASAALIEAAIAEHADAILVHHGWFWKNENPCLIGIKGQRARTLLSAGVSLIAYHLPLDAHPELGNNATLGRRLDFIDMEPTALANGLLWVGRLAQPMTPASFTEHVSQRLARPALRVGRETGSIERVAWCTGGCQGYIEQAASLGVDAFLSGELSEQTTHQARELGLCYLAAGHHATERYGVQALGKHLAERFGLWHRFVEIDNPA.

His68, His69, Asp106, His222, and Glu226 together coordinate a divalent metal cation.

It belongs to the GTP cyclohydrolase I type 2/NIF3 family. As to quaternary structure, homohexamer.

This chain is GTP cyclohydrolase 1 type 2 homolog, found in Allochromatium vinosum (strain ATCC 17899 / DSM 180 / NBRC 103801 / NCIMB 10441 / D) (Chromatium vinosum).